Consider the following 513-residue polypeptide: Protein CYCLOPS (513 aa).

Residues 327-435 are disordered; it reads QIHGGTASGE…ERSRKMAEAK (109 aa). Positions 334–347 are enriched in low complexity; it reads SGEPSQSESSAAAP. Polar residues predominate over residues 359-381; that stretch reads PSNSSQTLCDSSWKQVGESTQNR. The span at 384–396 shows a compositional bias: basic and acidic residues; that stretch reads GVREQIMDNLKDD. 2 short sequence motifs (nuclear localization signal) span residues 397–401 and 421–424; these read RKRKR and KKRR. Residues 447–513 are a coiled coil; it reads MQAVMKRCEN…ERLLSETGKI (67 aa).

This sequence belongs to the CYCLOPS family.

Its subcellular location is the nucleus. Functionally, involved symbiotic signaling. Required for root infection by symbiotic rhizobia, infection thread (IT) formation, and nodule development. Required for symbiosome formation (i.e. the release of the bacteria from the ITs) and subsequent symbiosome development. Involved in arbuscular mycorrhizal (AM) symbiosis. This is Protein CYCLOPS from Pisum sativum (Garden pea).